The primary structure comprises 465 residues: Kinesin-like protein KIN-1 (465 aa).

In terms of domain architecture, Kinesin motor spans 3-334 (NVTVCARFRP…LRFGMRAKHI (332 aa)). Residue 87–94 (GQTGAGKT) coordinates ATP. Residues 338 to 358 (PRASEVKSAKAQEEPSSVTKD) form a disordered region. Residues 341–358 (SEVKSAKAQEEPSSVTKD) are compositionally biased toward basic and acidic residues. Residues 402-444 (VYEDIVSKTIQSLQQAVDELQQKVKKLEAENIGIQEQALRNHE) are a coiled coil.

It belongs to the TRAFAC class myosin-kinesin ATPase superfamily. Kinesin family. KIN-1 subfamily. Homodimer. Interacts with WIP1 and WIP2. As to expression, specifically expressed in ovules and anthers.

In terms of biological role, kinesin-like motor protein that promotes synapsis and is required for proper crossover distribution in meiosis. Plays a role in the nuclear division cycles during megagametogenesis. The chain is Kinesin-like protein KIN-1 from Arabidopsis thaliana (Mouse-ear cress).